Here is a 206-residue protein sequence, read N- to C-terminus: MSPTRAQLTRQIIEAGRFLYGRGWSPATSSNYSARLSPGEALLTVSGKHKGQLGEDDVLATDMAGNSLEPGKKPSAETLLHTQLYTWKTEIGAVLHTHSVNATVLSRLILSDSLVFADYELQKAFAGIGTHECQICVPIFDNDQDIARLASRVRPWLDEHPDCVGYLIRGHGLYTWGAAMNDALRQVEAFEFLFDCELKMRALQGR.

H96 and H98 together coordinate Zn(2+).

Belongs to the aldolase class II family. MtnB subfamily. Zn(2+) is required as a cofactor.

The catalysed reaction is 5-(methylsulfanyl)-D-ribulose 1-phosphate = 5-methylsulfanyl-2,3-dioxopentyl phosphate + H2O. It functions in the pathway amino-acid biosynthesis; L-methionine biosynthesis via salvage pathway; L-methionine from S-methyl-5-thio-alpha-D-ribose 1-phosphate: step 2/6. Functionally, catalyzes the dehydration of methylthioribulose-1-phosphate (MTRu-1-P) into 2,3-diketo-5-methylthiopentyl-1-phosphate (DK-MTP-1-P). This Azotobacter vinelandii (strain DJ / ATCC BAA-1303) protein is Methylthioribulose-1-phosphate dehydratase.